Consider the following 594-residue polypeptide: Golgi-associated RAB2 interactor protein 4 (594 aa).

The segment at 390–525 (AAGLPVSTRQ…SSGSSKRLGR (136 aa)) is disordered. The span at 396 to 406 (STRQSKSSLSG) shows a compositional bias: polar residues. Basic and acidic residues-rich tracts occupy residues 408-433 (HGRE…DKAL), 442-455 (TGES…DKIA), and 468-477 (ASRDGKKEKG). Positions 510–521 (RSSSTTSSGSSK) are enriched in low complexity.

This sequence belongs to the GARIN family. In terms of assembly, interacts (via N-terminus) with RAB2B (in GTP-bound form).

The protein localises to the golgi apparatus. Functionally, RAB2B effector protein required for the compacted Golgi morphology, probably through interaction with small GTPase RAB2B. This chain is Golgi-associated RAB2 interactor protein 4 (GARIN4), found in Macaca fascicularis (Crab-eating macaque).